Reading from the N-terminus, the 101-residue chain is Anti-sigma factor RshA (101 aa).

The segment at 1-20 (MSETEREDERWTPPIGPIDP) is disordered. C25, H51, C55, and C58 together coordinate iron-sulfur cluster. Phosphothreonine is present on T96.

The protein belongs to the zinc-associated anti-sigma factor (ZAS) superfamily. Interacts with cognate ECF RNA polymerase sigma factor SigH under reducing conditions; the complex is disrupted under oxiding conditions or as temperatures rise. Binding inhibits the interaction of SigH with the RNA polymerase catalytic core. Iron-sulfur cluster serves as cofactor. In terms of processing, phosphorylated, probably by PknB. Phosphorylation decreases interaction with SigH, probably leading to increased SigH-mediated transcription.

In terms of biological role, a redox-regulated anti-sigma factor for cognate extracytoplasmic function (ECF) sigma factor SigH. ECF sigma factors are held in an inactive form by an anti-sigma factor. Overexpression leads to increased susceptibility to diamide. In Mycolicibacterium smegmatis (strain ATCC 700084 / mc(2)155) (Mycobacterium smegmatis), this protein is Anti-sigma factor RshA (rshA).